The sequence spans 890 residues: Exo-beta-D-glucosaminidase (890 aa).

Positions 1–18 (MIAKAVAALLLGSGLASA) are cleaved as a signal peptide. A propeptide spanning residues 19 to 26 (AGTPLTSK) is cleaved from the precursor. 3 N-linked (GlcNAc...) asparagine glycosylation sites follow: asparagine 194, asparagine 334, and asparagine 438. The Proton donor role is filled by aspartate 462. Glutamate 537 functions as the Nucleophile in the catalytic mechanism. 2 N-linked (GlcNAc...) asparagine glycosylation sites follow: asparagine 576 and asparagine 687.

It belongs to the glycosyl hydrolase 2 family. As to quaternary structure, monomer.

The protein resides in the secreted. Its subcellular location is the extracellular space. It carries out the reaction Hydrolysis of chitosan or chitosan oligosaccharides to remove successive D-glucosamine residues from the non-reducing termini.. Hydrolyzes chitosan and chitooligosaccharides with retention of anomeric configuration. Has no activity against beta-D-galactoside, beta-D-glucuronide, beta-D-mannoside, chitin, glycol chitosan, cellulose, N,N'-diacetylchitibiose and pNP-GlcNAc. This is Exo-beta-D-glucosaminidase from Hypocrea virens (Gliocladium virens).